The primary structure comprises 443 residues: Glutamate--tRNA ligase 1 (443 aa).

Residues 9–19 (PSPTGYLHVGN) carry the 'HIGH' region motif. The 'KMSKS' region motif lies at 238-242 (KISKR). Lys-241 is an ATP binding site.

This sequence belongs to the class-I aminoacyl-tRNA synthetase family. Glutamate--tRNA ligase type 1 subfamily. In terms of assembly, monomer.

Its subcellular location is the cytoplasm. It catalyses the reaction tRNA(Glu) + L-glutamate + ATP = L-glutamyl-tRNA(Glu) + AMP + diphosphate. Functionally, catalyzes the attachment of glutamate to tRNA(Glu) in a two-step reaction: glutamate is first activated by ATP to form Glu-AMP and then transferred to the acceptor end of tRNA(Glu). This is Glutamate--tRNA ligase 1 from Ehrlichia ruminantium (strain Welgevonden).